The primary structure comprises 106 residues: GQPKANPTVTLFPPSSEELQANKATLVCLISDFYPGAVTVAWKADGSPVKAGVETTKPSKQSNNKYAASSYLSLTPEQWKSHRSYSCQVTHEGSTVEKTVAPTECS.

The 95-residue stretch at 7–101 (PTVTLFPPSS…EGSTVEKTVA (95 aa)) folds into the Ig-like domain. Residues cysteine 28 and cysteine 87 are joined by a disulfide bond.

As to quaternary structure, immunoglobulins are composed of two identical heavy chains and two identical light chains; disulfide-linked.

It localises to the secreted. The protein resides in the cell membrane. In terms of biological role, constant region of immunoglobulin light chains. Immunoglobulins, also known as antibodies, are membrane-bound or secreted glycoproteins produced by B lymphocytes. In the recognition phase of humoral immunity, the membrane-bound immunoglobulins serve as receptors which, upon binding of a specific antigen, trigger the clonal expansion and differentiation of B lymphocytes into immunoglobulins-secreting plasma cells. Secreted immunoglobulins mediate the effector phase of humoral immunity, which results in the elimination of bound antigens. The antigen binding site is formed by the variable domain of one heavy chain, together with that of its associated light chain. Thus, each immunoglobulin has two antigen binding sites with remarkable affinity for a particular antigen. The variable domains are assembled by a process called V-(D)-J rearrangement and can then be subjected to somatic hypermutations which, after exposure to antigen and selection, allow affinity maturation for a particular antigen. The chain is Immunoglobulin lambda constant 1 from Homo sapiens (Human).